The chain runs to 102 residues: Small ribosomal subunit protein uS10 (102 aa).

Belongs to the universal ribosomal protein uS10 family. In terms of assembly, part of the 30S ribosomal subunit.

In terms of biological role, involved in the binding of tRNA to the ribosomes. The chain is Small ribosomal subunit protein uS10 from Thermococcus gammatolerans (strain DSM 15229 / JCM 11827 / EJ3).